The sequence spans 274 residues: Mitochondrial outer membrane protein porin 3 (274 aa).

The residue at position 76 (S76) is a Phosphoserine.

It belongs to the eukaryotic mitochondrial porin (TC 1.B.8.1) family. In terms of assembly, interacts with KIN14F/KP1. Interacts with FBA6 and GAPC1. In terms of tissue distribution, expressed in leaf tips, anthers and stigma.

The protein localises to the cell membrane. It is found in the mitochondrion outer membrane. Its function is as follows. Forms a channel through the mitochondrial outer membrane that allows diffusion of small hydrophilic molecules. The channel adopts an open conformation at low or zero membrane potential and a closed conformation at potentials above 30-40 mV. The open state has a weak anion selectivity whereas the closed state is cation-selective. This is Mitochondrial outer membrane protein porin 3 (VDAC3) from Arabidopsis thaliana (Mouse-ear cress).